A 456-amino-acid chain; its full sequence is Mitochondrial import inner membrane translocase subunit TIM50 (456 aa).

The N-terminal 22 residues, 1-22 (MSLSKLSQKCFSRHHARTFIRF), are a transit peptide targeting the mitochondrion. Residues 23-171 (SSSDFQSLLG…RRKRMERNTR (149 aa)) lie on the Mitochondrial matrix side of the membrane. Disordered stretches follow at residues 101–120 (ETEKVASSPAPATPPSAIDE) and 132–165 (EEAAASKTSAPSGSSGDNNDQPGNAEEVEARRKR). Residues 137–153 (SKTSAPSGSSGDNNDQP) show a composition bias toward polar residues. A helical membrane pass occupies residues 172-192 (IGGYVLLGGSVIGFISFCFYY). The Mitochondrial intermembrane segment spans residues 193–456 (GRAQRDEAGN…LFGFRRHASA (264 aa)). In terms of domain architecture, FCP1 homology spans 247 to 391 (YLQPKYTIVI…VDLAELLKTI (145 aa)).

The protein belongs to the TIM50 family. Component of the TIM23 complex at least composed of tim-23, tim-17 and tim-50.

The protein localises to the mitochondrion inner membrane. In terms of biological role, essential component of the TIM23 complex, a complex that mediates the translocation of transit peptide-containing proteins across the mitochondrial inner membrane. This Caenorhabditis briggsae protein is Mitochondrial import inner membrane translocase subunit TIM50 (scpl-4).